The chain runs to 729 residues: Fibroblast growth factor receptor 2 (729 aa).

A signal peptide spans 1–21; that stretch reads MFSWSYLMGLVMVATATLSLA. Topologically, residues 22 to 285 are extracellular; the sequence is RPSYNIAEDT…ELDSSSEYTE (264 aa). The segment at 29-62 is disordered; it reads EDTTLEPEDANSSGDDEDDNDGSEDFTNDNNHMR. A compositionally biased stretch (acidic residues) spans 31–55; that stretch reads TTLEPEDANSSGDDEDDNDGSEDFT. Residue Asn39 is glycosylated (N-linked (GlcNAc...) asparagine). Ig-like C2-type domains are found at residues 64–157 and 166–268; these read PYWT…YHLD and PILQ…AWLT. The heparin-binding stretch occupies residues 71 to 88; the sequence is KLEKKLHAVPAANTVKFR. A disulfide bond links Cys89 and Cys141. N-linked (GlcNAc...) asparagine glycosylation is found at Asn138, Asn151, Asn175, Asn207, Asn228, Asn241, and Asn256. Cysteines 188 and 252 form a disulfide. A helical transmembrane segment spans residues 286 to 306; that stretch reads IAIYCVGGFLITCMIGTIMVC. The Cytoplasmic portion of the chain corresponds to 307 to 729; sequence HMKGRGKKSD…SQHTNGTIKT (423 aa). Tyr374 carries the phosphotyrosine; by autocatalysis modification. Positions 389–678 constitute a Protein kinase domain; that stretch reads LTLGKPLGEG…LTQTTNEEYL (290 aa). Residues 395 to 403, Lys425, 473 to 475, and Asn479 each bind ATP; these read LGEGCFGQV and EYA. Tyr494 bears the Phosphotyrosine; by autocatalysis mark. The Proton acceptor role is filled by Asp534. Phosphotyrosine; by autocatalysis occurs at positions 564, 565, and 677. The segment at 683-729 is disordered; it reads PLEQYSPSYPDTRSSCSSGDDSVFSPDAMPYDPCLPKSQHTNGTIKT. The span at 693 to 707 shows a compositional bias: low complexity; it reads DTRSSCSSGDDSVFS. Residues 720–729 show a composition bias toward polar residues; that stretch reads SQHTNGTIKT.

Belongs to the protein kinase superfamily. Tyr protein kinase family. Fibroblast growth factor receptor subfamily. Monomer. Homodimer after ligand binding. Autophosphorylated. Binding of FGF family members together with heparan sulfate proteoglycan or heparin promotes receptor dimerization and autophosphorylation on tyrosine residues. Autophosphorylation occurs in trans between the two FGFR molecules present in the dimer. Post-translationally, N-glycosylated in the endoplasmic reticulum. The N-glycan chains undergo further maturation to an Endo H-resistant form in the Golgi apparatus. In terms of processing, ubiquitinated. FGFR2 is rapidly ubiquitinated after autophosphorylation, leading to internalization and degradation. Subject to degradation both in lysosomes and by the proteasome.

The protein localises to the cell membrane. Its subcellular location is the golgi apparatus. It localises to the cytoplasmic vesicle. The catalysed reaction is L-tyrosyl-[protein] + ATP = O-phospho-L-tyrosyl-[protein] + ADP + H(+). Its activity is regulated as follows. Present in an inactive conformation in the absence of bound ligand. Ligand binding leads to dimerization and activation by autophosphorylation on tyrosine residues. In terms of biological role, tyrosine-protein kinase that acts as a cell-surface receptor for fibroblast growth factors and plays an essential role in the regulation of cell proliferation, differentiation, migration and apoptosis, and in the regulation of embryonic development. Required for normal embryonic patterning, limb bud development, lung morphogenesis, osteogenesis and skin development. Plays an essential role in the regulation of osteoblast differentiation, proliferation and apoptosis, and is required for normal skeleton development. Promotes cell proliferation in keratinocytes and immature osteoblasts, but promotes apoptosis in differentiated osteoblasts. Phosphorylates PLCG1, FRS2 and PAK4. Ligand binding leads to the activation of several signaling cascades. Activation of PLCG1 leads to the production of the cellular signaling molecules diacylglycerol and inositol 1,4,5-trisphosphate. Phosphorylation of FRS2 triggers recruitment of GRB2, GAB1, PIK3R1 and SOS1, and mediates activation of RAS, MAPK1/ERK2, MAPK3/ERK1 and the MAP kinase signaling pathway, as well as of the AKT1 signaling pathway. FGFR2 signaling is down-regulated by ubiquitination, internalization and degradation. Mutations that lead to constitutive kinase activation or impair normal FGFR2 maturation, internalization and degradation lead to aberrant signaling. Over-expressed FGFR2 promotes activation of STAT1. The sequence is that of Fibroblast growth factor receptor 2 (FGFR2) from Notophthalmus viridescens (Eastern newt).